A 235-amino-acid chain; its full sequence is Exosome complex component Rrp4 (235 aa).

Residues 67–139 (GDVVIGLIQS…KTRSPLLTVQ (73 aa)) enclose the S1 motif domain. The KH domain maps to 149 to 205 (GKIVEISPAKVPRVIGRKMSMLKTLEEKTECKIFVARNGRIHLECPNEDLEAIAVMA).

It belongs to the RRP4 family. Component of the archaeal exosome complex. Forms a trimer of Rrp4 and/or Csl4 subunits. The trimer associates with a hexameric ring-like arrangement composed of 3 Rrp41-Rrp42 heterodimers.

It is found in the cytoplasm. In terms of biological role, non-catalytic component of the exosome, which is a complex involved in RNA degradation. Increases the RNA binding and the efficiency of RNA degradation. Confers strong poly(A) specificity to the exosome. This is Exosome complex component Rrp4 from Aeropyrum pernix (strain ATCC 700893 / DSM 11879 / JCM 9820 / NBRC 100138 / K1).